Reading from the N-terminus, the 86-residue chain is Chymotrypsin inhibitor (86 aa).

Positions 1–22 (MKLLFAIVALLALAFLCADISA) are cleaved as a signal peptide.

Belongs to the protease inhibitor I13 (potato type I serine protease inhibitor) family. Monomer. In terms of tissue distribution, expressed in the body wall, coelomocytes and at a lower level in intestine.

The protein resides in the secreted. Its function is as follows. Inhibits L.terrestris digestive chymotrypsin LT_CH 1 and bovine alpha-chymotrypsin. The polypeptide is Chymotrypsin inhibitor (Lumbricus terrestris (Common earthworm)).